The sequence spans 206 residues: Peptidyl-tRNA hydrolase (206 aa).

Tyr-14 contacts tRNA. His-19 acts as the Proton acceptor in catalysis. Tyr-64, Asn-66, and Asn-112 together coordinate tRNA.

This sequence belongs to the PTH family. In terms of assembly, monomer.

The protein resides in the cytoplasm. It carries out the reaction an N-acyl-L-alpha-aminoacyl-tRNA + H2O = an N-acyl-L-amino acid + a tRNA + H(+). Functionally, hydrolyzes ribosome-free peptidyl-tRNAs (with 1 or more amino acids incorporated), which drop off the ribosome during protein synthesis, or as a result of ribosome stalling. Its function is as follows. Catalyzes the release of premature peptidyl moieties from peptidyl-tRNA molecules trapped in stalled 50S ribosomal subunits, and thus maintains levels of free tRNAs and 50S ribosomes. This is Peptidyl-tRNA hydrolase from Rhodopseudomonas palustris (strain ATCC BAA-98 / CGA009).